A 261-amino-acid polypeptide reads, in one-letter code: Triosephosphate isomerase (261 aa).

10 to 12 contacts substrate; it reads NWK. His100 acts as the Electrophile in catalysis. Glu172 serves as the catalytic Proton acceptor. Residues Gly178, Ser218, and 239–240 each bind substrate; that span reads GG.

The protein belongs to the triosephosphate isomerase family. In terms of assembly, homodimer.

Its subcellular location is the cytoplasm. It carries out the reaction D-glyceraldehyde 3-phosphate = dihydroxyacetone phosphate. It participates in carbohydrate biosynthesis; gluconeogenesis. Its pathway is carbohydrate degradation; glycolysis; D-glyceraldehyde 3-phosphate from glycerone phosphate: step 1/1. Functionally, involved in the gluconeogenesis. Catalyzes stereospecifically the conversion of dihydroxyacetone phosphate (DHAP) to D-glyceraldehyde-3-phosphate (G3P). The chain is Triosephosphate isomerase from Mycobacteroides abscessus (strain ATCC 19977 / DSM 44196 / CCUG 20993 / CIP 104536 / JCM 13569 / NCTC 13031 / TMC 1543 / L948) (Mycobacterium abscessus).